Reading from the N-terminus, the 187-residue chain is Probable nicotinate-nucleotide adenylyltransferase (187 aa).

Belongs to the NadD family.

The catalysed reaction is nicotinate beta-D-ribonucleotide + ATP + H(+) = deamido-NAD(+) + diphosphate. It functions in the pathway cofactor biosynthesis; NAD(+) biosynthesis; deamido-NAD(+) from nicotinate D-ribonucleotide: step 1/1. Catalyzes the reversible adenylation of nicotinate mononucleotide (NaMN) to nicotinic acid adenine dinucleotide (NaAD). The chain is Probable nicotinate-nucleotide adenylyltransferase from Agrobacterium fabrum (strain C58 / ATCC 33970) (Agrobacterium tumefaciens (strain C58)).